Here is a 506-residue protein sequence, read N- to C-terminus: Aluminum-activated malate transporter 7 (506 aa).

Helical transmembrane passes span 28–48 (VGLV…YDSF), 52–72 (AMWA…ATLG), 78–98 (VAAT…ASMS), 104–124 (PILL…VRFF), 130–150 (RYDY…VSGF), and 166–186 (VIIG…VWAG). The segment at 461-485 (DDGNNDDTSKNDNGSKEVSIHEKHE) is disordered. Positions 467-485 (DTSKNDNGSKEVSIHEKHE) are enriched in basic and acidic residues.

The protein belongs to the aromatic acid exporter (TC 2.A.85) family.

It localises to the membrane. Malate transporter. This is Aluminum-activated malate transporter 7 (ALMT7) from Arabidopsis thaliana (Mouse-ear cress).